The primary structure comprises 544 residues: Tyrosyl-DNA phosphodiesterase 1 (544 aa).

His182 functions as the Nucleophile in the catalytic mechanism. Residue Lys184 participates in substrate binding. Positions 312–316 (SIGTS) are interaction with DNA. The Proton donor/acceptor role is filled by His432. Lys434 lines the substrate pocket.

Belongs to the tyrosyl-DNA phosphodiesterase family.

It is found in the nucleus. Its function is as follows. DNA repair enzyme that can remove a variety of covalent adducts from DNA through hydrolysis of a 3'-phosphodiester bond, giving rise to DNA with a free 3' phosphate. Catalyzes the hydrolysis of dead-end complexes between DNA and the topoisomerase I active site tyrosine residue. Hydrolyzes 3'-phosphoglycolates on protruding 3' ends on DNA double-strand breaks due to DNA damage by radiation and free radicals. Also cleaves 5' phosphotyrosyl adducts resulting from dead-end complexes between DNA and the active site tyrosine of topoisomerase II. Contributes to DNA repair after radiation damage. Acts on blunt-ended double-strand DNA breaks and on single-stranded DNA. May have low 3'exonuclease activity and may be able to remove a single nucleoside from the 3'end of DNA and RNA molecules with 3'hydroxyl groups. Has no exonuclease activity towards DNA or RNA with a 3'phosphate. The protein is Tyrosyl-DNA phosphodiesterase 1 (TDP1) of Saccharomyces cerevisiae (strain ATCC 204508 / S288c) (Baker's yeast).